Consider the following 141-residue polypeptide: Hemoglobin subunit beta-C(NA) (141 aa).

A Globin domain is found at 1–141 (PBKALITGFW…VASALAHRYH (141 aa)). Residues His58 and His87 each contribute to the heme b site.

The protein belongs to the globin family. As to quaternary structure, heterotetramer of two alpha chains and two beta chains. As to expression, red blood cells.

In terms of biological role, involved in oxygen transport from the lung to the various peripheral tissues. This is Hemoglobin subunit beta-C(NA) from Ammotragus lervia (Barbary sheep).